The sequence spans 300 residues: 4-hydroxy-tetrahydrodipicolinate synthase (300 aa).

Threonine 45 provides a ligand contact to pyruvate. Catalysis depends on tyrosine 140, which acts as the Proton donor/acceptor. Residue lysine 169 is the Schiff-base intermediate with substrate of the active site. Position 210 (isoleucine 210) interacts with pyruvate.

It belongs to the DapA family. In terms of assembly, homotetramer; dimer of dimers.

The protein resides in the cytoplasm. The catalysed reaction is L-aspartate 4-semialdehyde + pyruvate = (2S,4S)-4-hydroxy-2,3,4,5-tetrahydrodipicolinate + H2O + H(+). Its pathway is amino-acid biosynthesis; L-lysine biosynthesis via DAP pathway; (S)-tetrahydrodipicolinate from L-aspartate: step 3/4. Its function is as follows. Catalyzes the condensation of (S)-aspartate-beta-semialdehyde [(S)-ASA] and pyruvate to 4-hydroxy-tetrahydrodipicolinate (HTPA). The protein is 4-hydroxy-tetrahydrodipicolinate synthase of Helicobacter pylori (strain HPAG1).